Reading from the N-terminus, the 453-residue chain is UDP-N-acetylmuramoylalanine--D-glutamate ligase (453 aa).

An ATP-binding site is contributed by 117-123; that stretch reads GANGKST.

The protein belongs to the MurCDEF family.

The protein localises to the cytoplasm. The enzyme catalyses UDP-N-acetyl-alpha-D-muramoyl-L-alanine + D-glutamate + ATP = UDP-N-acetyl-alpha-D-muramoyl-L-alanyl-D-glutamate + ADP + phosphate + H(+). The protein operates within cell wall biogenesis; peptidoglycan biosynthesis. In terms of biological role, cell wall formation. Catalyzes the addition of glutamate to the nucleotide precursor UDP-N-acetylmuramoyl-L-alanine (UMA). The chain is UDP-N-acetylmuramoylalanine--D-glutamate ligase from Methylobacillus flagellatus (strain ATCC 51484 / DSM 6875 / VKM B-1610 / KT).